Consider the following 274-residue polypeptide: Large ribosomal subunit protein uL2 (274 aa).

Residues 223–274 form a disordered region; the sequence is VAMNPVDHPHGGGEGRTGEGRHAVDPWGNLTKGYRTRNNKRTQSMIVSRRKK. Basic and acidic residues predominate over residues 229 to 246; that stretch reads DHPHGGGEGRTGEGRHAV.

This sequence belongs to the universal ribosomal protein uL2 family. In terms of assembly, part of the 50S ribosomal subunit. Forms a bridge to the 30S subunit in the 70S ribosome.

In terms of biological role, one of the primary rRNA binding proteins. Required for association of the 30S and 50S subunits to form the 70S ribosome, for tRNA binding and peptide bond formation. It has been suggested to have peptidyltransferase activity; this is somewhat controversial. Makes several contacts with the 16S rRNA in the 70S ribosome. The polypeptide is Large ribosomal subunit protein uL2 (Verminephrobacter eiseniae (strain EF01-2)).